We begin with the raw amino-acid sequence, 342 residues long: Flavanone 3-dioxygenase 2 (342 aa).

The Fe2OG dioxygenase domain maps to 193–293 (QEQHMAVNYY…RMSVASFLCP (101 aa)). Fe cation contacts are provided by His-217, Asp-219, and His-274. Residue Arg-284 coordinates 2-oxoglutarate.

The protein belongs to the iron/ascorbate-dependent oxidoreductase family. Requires Fe(2+) as cofactor. L-ascorbate serves as cofactor. As to expression, expressed in roots, leaves and stems. Expressed at low levels in seeds.

It catalyses the reaction a (2S)-flavan-4-one + 2-oxoglutarate + O2 = a (2R,3R)-dihydroflavonol + succinate + CO2. Its pathway is secondary metabolite biosynthesis; flavonoid biosynthesis. Its function is as follows. Catalyzes the 3-beta-hydroxylation of 2S-flavanones to 2R,3R-dihydroflavonols which are intermediates in the biosynthesis of flavonols, anthocyanidins, catechins and proanthocyanidins in plants. Converts (2S)-eriodictyol to (+)-taxifolin and (2S)-naringenin to (+)-(2R/3R)-dihydrokaempferol in vitro. The protein is Flavanone 3-dioxygenase 2 of Oryza sativa subsp. japonica (Rice).